The sequence spans 51 residues: Large ribosomal subunit protein bL33 (51 aa).

This sequence belongs to the bacterial ribosomal protein bL33 family.

The protein is Large ribosomal subunit protein bL33 of Pseudoalteromonas atlantica (strain T6c / ATCC BAA-1087).